The primary structure comprises 510 residues: Cytochrome P450 4A6 (510 aa).

Residues 1 to 4 constitute a propeptide that is removed on maturation; the sequence is MSVS. Glu-321 and Cys-457 together coordinate heme.

The protein belongs to the cytochrome P450 family. It depends on heme as a cofactor. As to expression, liver; kidney.

Its subcellular location is the endoplasmic reticulum membrane. The protein resides in the microsome membrane. It carries out the reaction an omega-methyl-long-chain fatty acid + reduced [NADPH--hemoprotein reductase] + O2 = an omega-hydroxy-long-chain fatty acid + oxidized [NADPH--hemoprotein reductase] + H2O + H(+). Cytochromes P450 are a group of heme-thiolate monooxygenases. In liver microsomes, this enzyme is involved in an NADPH-dependent electron transport pathway. It oxidizes a variety of structurally unrelated compounds, including steroids, fatty acids, and xenobiotics. In terms of biological role, the kidney P-450 system is rather specialized for the omega-hydroxylation of fatty acids. Both P450-KA1 and P450-KA2 catalyze the omega- and (omega-1)-hydroxylation of various fatty acids with no drug-metabolizing activity, and hydroxylate prostaglandin A1 and A2 solely at the omega-position. The chain is Cytochrome P450 4A6 (CYP4A6) from Oryctolagus cuniculus (Rabbit).